We begin with the raw amino-acid sequence, 355 residues long: Probable F-box protein At5g36000 (355 aa).

Over residues M1–G14 the composition is skewed to basic and acidic residues. A disordered region spans residues M1 to G44. Positions Q78–A124 constitute an F-box; degenerate domain.

This is Probable F-box protein At5g36000 from Arabidopsis thaliana (Mouse-ear cress).